Here is a 356-residue protein sequence, read N- to C-terminus: Peritrophin-44 (356 aa).

A signal peptide spans 1–23 (MKELQITTGCLLLMVAAIGKTSA). 5 Chitin-binding type-2 domains span residues 28–85 (SETC…KCIS), 88–146 (KNAC…ECTA), 147–201 (DSIC…PCLA), 220–283 (NFVC…PCTF), and 286–355 (CGNL…YKLC). A disulfide bond links C62 and C75. N114 is a glycosylation site (N-linked (GlcNAc...) asparagine). 3 cysteine pairs are disulfide-bonded: C122-C135, C181-C193, and C262-C273. N-linked (GlcNAc...) asparagine glycosylation is present at N309.

Glycosylated. As to expression, larval peritrophic membrane.

Functionally, may have roles in the maintenance of peritrophic membrane structure and in the determination of the porosity of the peritrophic membrane. May bind chitin or related oligosaccharide structures. This Lucilia cuprina (Green bottle fly) protein is Peritrophin-44.